The sequence spans 292 residues: Bifunctional protein FolD (292 aa).

NADP(+)-binding positions include 166–168 (GRS), Ser-191, and Ile-232.

The protein belongs to the tetrahydrofolate dehydrogenase/cyclohydrolase family. In terms of assembly, homodimer.

It catalyses the reaction (6R)-5,10-methylene-5,6,7,8-tetrahydrofolate + NADP(+) = (6R)-5,10-methenyltetrahydrofolate + NADPH. It carries out the reaction (6R)-5,10-methenyltetrahydrofolate + H2O = (6R)-10-formyltetrahydrofolate + H(+). It participates in one-carbon metabolism; tetrahydrofolate interconversion. Functionally, catalyzes the oxidation of 5,10-methylenetetrahydrofolate to 5,10-methenyltetrahydrofolate and then the hydrolysis of 5,10-methenyltetrahydrofolate to 10-formyltetrahydrofolate. The polypeptide is Bifunctional protein FolD (Wolbachia pipientis wMel).